We begin with the raw amino-acid sequence, 146 residues long: Putative phosphotransferase enzyme IIA component YadI (146 aa).

Residues 1–124 enclose the PTS EIIA type-4 domain; it reads MLGWVITCHD…RIVELGAPEV (124 aa). His9 serves as the catalytic Tele-phosphohistidine intermediate.

It is found in the cytoplasm. Its function is as follows. The phosphoenolpyruvate-dependent sugar phosphotransferase system (sugar PTS), a major carbohydrate active -transport system, catalyzes the phosphorylation of incoming sugar substrates concomitantly with their translocation across the cell membrane. This is Putative phosphotransferase enzyme IIA component YadI (yadI) from Escherichia coli (strain K12).